The following is a 262-amino-acid chain: Phosphate import ATP-binding protein PstB (262 aa).

One can recognise an ABC transporter domain in the interval 16–257; sequence MEARHLSVRY…PSEQRTEDYV (242 aa). ATP is bound at residue 48 to 55; that stretch reads GPSGCGKS.

The protein belongs to the ABC transporter superfamily. Phosphate importer (TC 3.A.1.7) family. As to quaternary structure, the complex is composed of two ATP-binding proteins (PstB), two transmembrane proteins (PstC and PstA) and a solute-binding protein (PstS).

The protein localises to the cell inner membrane. The catalysed reaction is phosphate(out) + ATP + H2O = ADP + 2 phosphate(in) + H(+). Its function is as follows. Part of the ABC transporter complex PstSACB involved in phosphate import. Responsible for energy coupling to the transport system. This is Phosphate import ATP-binding protein PstB from Anaeromyxobacter dehalogenans (strain 2CP-C).